Consider the following 138-residue polypeptide: Enhancer of split malpha protein (138 aa).

This sequence belongs to the M4-like protein family.

Functionally, part of the Notch signaling pathway. This is Enhancer of split malpha protein from Drosophila melanogaster (Fruit fly).